Consider the following 92-residue polypeptide: MNFSGFEFSSIVAFFLLILQLSTAAVLPADYAYGVADEMSALPDSGSLFAEQRPSKRAQTFVRFGKRAQTFVRFGKRGQTFVRFGRSAPFEQ.

Positions 1-24 (MNFSGFEFSSIVAFFLLILQLSTA) are cleaved as a signal peptide. A propeptide spanning residues 25–55 (AVLPADYAYGVADEMSALPDSGSLFAEQRPS) is cleaved from the precursor. Residues Phe64, Phe74, and Phe84 each carry the phenylalanine amide modification. Positions 87–92 (SAPFEQ) are excised as a propeptide.

This sequence belongs to the FARP (FMRFamide related peptide) family. As to expression, each flp gene is expressed in a distinct set of neurons.

Its subcellular location is the secreted. FMRFamides and FMRFamide-like peptides are neuropeptides. AQTFVRF-amide inhibits the activity of dissected pharyngeal myogenic muscle system. This chain is FMRFamide-like neuropeptides 16, found in Caenorhabditis elegans.